A 480-amino-acid polypeptide reads, in one-letter code: Ribulose bisphosphate carboxylase large chain (480 aa).

The propeptide occupies 1–2 (MS). Proline 3 is modified (N-acetylproline). Lysine 14 carries the N6,N6,N6-trimethyllysine modification. Substrate-binding residues include asparagine 123 and threonine 173. Lysine 175 functions as the Proton acceptor in the catalytic mechanism. Lysine 177 lines the substrate pocket. Positions 201, 203, and 204 each coordinate Mg(2+). Lysine 201 bears the N6-carboxylysine mark. Residue histidine 294 is the Proton acceptor of the active site. Arginine 295, histidine 327, and serine 379 together coordinate substrate.

This sequence belongs to the RuBisCO large chain family. Type I subfamily. Heterohexadecamer of 8 large chains and 8 small chains; disulfide-linked. The disulfide link is formed within the large subunit homodimers. The cofactor is Mg(2+). Post-translationally, the disulfide bond which can form in the large chain dimeric partners within the hexadecamer appears to be associated with oxidative stress and protein turnover.

It is found in the plastid. The protein resides in the chloroplast. The enzyme catalyses 2 (2R)-3-phosphoglycerate + 2 H(+) = D-ribulose 1,5-bisphosphate + CO2 + H2O. It carries out the reaction D-ribulose 1,5-bisphosphate + O2 = 2-phosphoglycolate + (2R)-3-phosphoglycerate + 2 H(+). RuBisCO catalyzes two reactions: the carboxylation of D-ribulose 1,5-bisphosphate, the primary event in carbon dioxide fixation, as well as the oxidative fragmentation of the pentose substrate in the photorespiration process. Both reactions occur simultaneously and in competition at the same active site. The sequence is that of Ribulose bisphosphate carboxylase large chain from Basella alba (Malabar spinach).